The sequence spans 111 residues: Cryptic phage CTXphi transcriptional repressor RstR (111 aa).

The 55-residue stretch at 6–60 (IRDLRVERDLNQEEVANGIGVGKNTYLAYEKGTQSPKLETVEKLAKFYGVPIAEL) folds into the HTH cro/C1-type domain. Residues 17–36 (QEEVANGIGVGKNTYLAYEK) constitute a DNA-binding region (H-T-H motif).

Its function is as follows. Transcriptional repressor of the integrated CTXPhi phage gene rstA2. The protein is Cryptic phage CTXphi transcriptional repressor RstR (rstR) of Vibrio cholerae.